A 362-amino-acid polypeptide reads, in one-letter code: DNA replication and repair protein RecF (362 aa).

30–37 is a binding site for ATP; sequence GPNGSGKT.

The protein belongs to the RecF family.

It is found in the cytoplasm. Functionally, the RecF protein is involved in DNA metabolism; it is required for DNA replication and normal SOS inducibility. RecF binds preferentially to single-stranded, linear DNA. It also seems to bind ATP. The protein is DNA replication and repair protein RecF of Proteus mirabilis (strain HI4320).